Reading from the N-terminus, the 246-residue chain is NAD(P)H-quinone oxidoreductase subunit K (246 aa).

[4Fe-4S] cluster is bound by residues Cys-62, Cys-63, Cys-127, and Cys-158.

Belongs to the complex I 20 kDa subunit family. In terms of assembly, NDH-1 can be composed of about 15 different subunits; different subcomplexes with different compositions have been identified which probably have different functions. It depends on [4Fe-4S] cluster as a cofactor.

It localises to the cellular thylakoid membrane. The enzyme catalyses a plastoquinone + NADH + (n+1) H(+)(in) = a plastoquinol + NAD(+) + n H(+)(out). It carries out the reaction a plastoquinone + NADPH + (n+1) H(+)(in) = a plastoquinol + NADP(+) + n H(+)(out). Functionally, NDH-1 shuttles electrons from an unknown electron donor, via FMN and iron-sulfur (Fe-S) centers, to quinones in the respiratory and/or the photosynthetic chain. The immediate electron acceptor for the enzyme in this species is believed to be plastoquinone. Couples the redox reaction to proton translocation, and thus conserves the redox energy in a proton gradient. Cyanobacterial NDH-1 also plays a role in inorganic carbon-concentration. The sequence is that of NAD(P)H-quinone oxidoreductase subunit K from Parasynechococcus marenigrum (strain WH8102).